The sequence spans 119 residues: MLDKKARIRTSREYRNVFEKGKRLSGRFLIIYYVENALDNNRFGFITNKKIGMAVIRNRIKRQLRAIVREYQGQVKNKHDIVLVARAGIGKSSFEGMEKDYIAIMKKAGLFARNANKID.

This sequence belongs to the RnpA family. Consists of a catalytic RNA component (M1 or rnpB) and a protein subunit.

The catalysed reaction is Endonucleolytic cleavage of RNA, removing 5'-extranucleotides from tRNA precursor.. RNaseP catalyzes the removal of the 5'-leader sequence from pre-tRNA to produce the mature 5'-terminus. It can also cleave other RNA substrates such as 4.5S RNA. The protein component plays an auxiliary but essential role in vivo by binding to the 5'-leader sequence and broadening the substrate specificity of the ribozyme. In Syntrophomonas wolfei subsp. wolfei (strain DSM 2245B / Goettingen), this protein is Ribonuclease P protein component.